We begin with the raw amino-acid sequence, 381 residues long: tRNA pseudouridine synthase Pus10 (381 aa).

D226 functions as the Nucleophile in the catalytic mechanism.

It belongs to the pseudouridine synthase Pus10 family.

It catalyses the reaction uridine(54) in tRNA = pseudouridine(54) in tRNA. It carries out the reaction uridine(55) in tRNA = pseudouridine(55) in tRNA. Its function is as follows. Responsible for synthesis of pseudouridine from uracil-54 and uracil-55 in the psi GC loop of transfer RNAs. The protein is tRNA pseudouridine synthase Pus10 of Nitrosopumilus maritimus (strain SCM1).